A 2260-amino-acid chain; its full sequence is Reducing polyketide synthase pksF (2260 aa).

The Ketosynthase family 3 (KS3) domain occupies 20 to 445; that stretch reads VEPIAIVGFG…GTNAHVVLDD (426 aa). Catalysis depends on for beta-ketoacyl synthase activity residues Cys-194, His-329, and His-368. The tract at residues 598–933 is malonyl-CoA:ACP transacylase (MAT) domain; the sequence is FVFTGQGAQW…ECAGKLHTIG (336 aa). Ser-689 functions as the For malonyltransferase activity in the catalytic mechanism. The segment at 984-1121 is N-terminal hotdog fold; it reads HELLGSRTPD…GYVAIEYDDR (138 aa). Positions 984–1281 are dehydratase (DH) domain; it reads HELLGSRTPD…FRNKLFSITA (298 aa). The PKS/mFAS DH domain occupies 984–1306; sequence HELLGSRTPD…TSTIGRNSPS (323 aa). His-1016 serves as the catalytic Proton acceptor; for dehydratase activity. The segment at 1150–1306 is C-terminal hotdog fold; that stretch reads RIAIDSADIY…TSTIGRNSPS (157 aa). Asp-1216 serves as the catalytic Proton donor; for dehydratase activity. Positions 1544–1859 are enoylreductase (ER) domain; sequence GILKTLHYEQ…DVDVVEKIVI (316 aa). Positions 1882-2104 are ketoreductase (KR) domain; sequence PDASYLIAGA…LRFCCDPDRV (223 aa). Residues 2174-2251 enclose the Carrier domain; that stretch reads QATDIVVEAI…LLAVKVAGKS (78 aa). Ser-2211 is modified (O-(pantetheine 4'-phosphoryl)serine).

The cofactor is pantetheine 4'-phosphate.

Reducing polyketide synthase that catalyzes the formation of a C22 intermediate attached to the ACP. Release by intramolecular hydrolysis by the enolized delta-carbonyl would give the pyrone product aslanipyrone. Alternatively, KR-mediated reduction of the beta-carbonyl of the C22 intermediate would form a beta-hydroxy thioester intermediate, which could be a substrate for a further KS-mediated condensation of an additional C2 unit to form a C24 intermediate, which cyclizes by aldol condensation followed by decarboxylation to form aslaniol. Neither aslanipyrone, aslaniol, nor their derivatives have been detected in A.solani, probably due to a low abundance and/or extensive post-PKS modification. It is assumed that the branching point from C22 to C24 is the result of KR activity on the C22 intermediate anchored to the ACP. In Alternaria solani, this protein is Reducing polyketide synthase pksF.